Consider the following 1218-residue polypeptide: Coatomer subunit alpha-3 (1218 aa).

WD repeat units lie at residues 7–48 (TKSN…DRFD), 49–88 (EHDG…CLFT), 91–132 (GHLD…AVLT), 133–172 (GHNH…KKTV), 202–241 (GHDR…AWEV), 246–285 (GHMN…GIQT), 288–326 (REHD…PAFS), 363–404 (SLNQ…AGRT), and 450–489 (PLPI…GELQ). Residues 854 to 893 (AMANGGDGFDAEEGEANEEDGEEGGWDLEDLELPPEAETP) form a disordered region. The span at 862-888 (FDAEEGEANEEDGEEGGWDLEDLELPP) shows a compositional bias: acidic residues.

Oligomeric complex that consists of at least the alpha, beta, beta', gamma, delta, epsilon and zeta subunits.

The protein resides in the cytoplasm. The protein localises to the golgi apparatus membrane. It localises to the cytoplasmic vesicle. It is found in the COPI-coated vesicle membrane. Functionally, the coatomer is a cytosolic protein complex that binds to dilysine motifs and reversibly associates with Golgi non-clathrin-coated vesicles, which further mediate biosynthetic protein transport from the ER, via the Golgi up to the trans Golgi network. Coatomer complex is required for budding from Golgi membranes, and is essential for the retrograde Golgi-to-ER transport of dilysine-tagged proteins. The protein is Coatomer subunit alpha-3 of Oryza sativa subsp. japonica (Rice).